Here is a 262-residue protein sequence, read N- to C-terminus: Ribosome-recycling factor, mitochondrial (262 aa).

The transit peptide at 1–55 directs the protein to the mitochondrion; that stretch reads MASGIRCFRLLHPAFRSYHAALTRPVSEVSMKTVSGRQHGHRQYSAYPAVPVRHF.

It belongs to the RRF family.

It is found in the mitochondrion. Responsible for the disassembly of ribosomes from messenger RNA at the termination of mitochondrial protein biosynthesis. Acts in collaboration with GFM2. Promotes mitochondrial ribosome recycling by dissolution of intersubunit contacts. This Mus musculus (Mouse) protein is Ribosome-recycling factor, mitochondrial (Mrrf).